Here is a 146-residue protein sequence, read N- to C-terminus: Putative actin-depolymerizing factor 8 (146 aa).

Residues 14–144 (PAWIEVPEKS…DLEVLRGRAN (131 aa)) form the ADF-H domain.

It belongs to the actin-binding proteins ADF family.

Its function is as follows. Actin-depolymerizing protein. Severs actin filaments (F-actin) and binds to actin monomers. The chain is Putative actin-depolymerizing factor 8 (ADF8) from Oryza sativa subsp. japonica (Rice).